A 261-amino-acid polypeptide reads, in one-letter code: tRNA pseudouridine synthase A 2 (261 aa).

Residue aspartate 59 is the Nucleophile of the active site. Tyrosine 117 is a substrate binding site.

This sequence belongs to the tRNA pseudouridine synthase TruA family. Homodimer.

It catalyses the reaction uridine(38/39/40) in tRNA = pseudouridine(38/39/40) in tRNA. Formation of pseudouridine at positions 38, 39 and 40 in the anticodon stem and loop of transfer RNAs. This is tRNA pseudouridine synthase A 2 from Desulfotalea psychrophila (strain LSv54 / DSM 12343).